Consider the following 436-residue polypeptide: GTPase Der (436 aa).

EngA-type G domains follow at residues 3 to 168 (PLIA…PESD) and 177 to 352 (IRLA…QNRS). GTP contacts are provided by residues 9 to 16 (GRPNVGKS), 56 to 60 (DTGGY), 120 to 123 (NKAE), 183 to 190 (GRPNVGKS), 230 to 234 (DTAGL), and 295 to 298 (NKWD). Residues 353–436 (RKISTSALNR…VTISLRFMQK (84 aa)) form the KH-like domain.

The protein belongs to the TRAFAC class TrmE-Era-EngA-EngB-Septin-like GTPase superfamily. EngA (Der) GTPase family. Associates with the 50S ribosomal subunit.

Its function is as follows. GTPase that plays an essential role in the late steps of ribosome biogenesis. The polypeptide is GTPase Der (Chlorobium luteolum (strain DSM 273 / BCRC 81028 / 2530) (Pelodictyon luteolum)).